A 463-amino-acid chain; its full sequence is ATP-dependent protease ATPase subunit HslU (463 aa).

Residues Ile-19 and 61–66 (GVGKTE) contribute to the ATP site. The interval 154–174 (FGGAQNSSQTSDTQEDGEIEK) is disordered. Asp-277, Glu-341, and Arg-413 together coordinate ATP.

This sequence belongs to the ClpX chaperone family. HslU subfamily. A double ring-shaped homohexamer of HslV is capped on each side by a ring-shaped HslU homohexamer. The assembly of the HslU/HslV complex is dependent on binding of ATP.

The protein localises to the cytoplasm. ATPase subunit of a proteasome-like degradation complex; this subunit has chaperone activity. The binding of ATP and its subsequent hydrolysis by HslU are essential for unfolding of protein substrates subsequently hydrolyzed by HslV. HslU recognizes the N-terminal part of its protein substrates and unfolds these before they are guided to HslV for hydrolysis. This Bacillus cereus (strain G9842) protein is ATP-dependent protease ATPase subunit HslU.